The sequence spans 660 residues: Acetyl-coenzyme A synthetase (660 aa).

CoA is bound by residues 197–200 (RGGK) and Thr317. ATP-binding positions include 397-399 (GEP), 421-426 (DTWWQT), Asp512, and Arg528. Residue Ser536 coordinates CoA. Arg539 contacts ATP. Mg(2+) contacts are provided by Val550, His552, and Val555. Position 625 is an N6-acetyllysine (Lys625).

The protein belongs to the ATP-dependent AMP-binding enzyme family. The cofactor is Mg(2+). In terms of processing, acetylated. Deacetylation by the SIR2-homolog deacetylase activates the enzyme.

It catalyses the reaction acetate + ATP + CoA = acetyl-CoA + AMP + diphosphate. Functionally, catalyzes the conversion of acetate into acetyl-CoA (AcCoA), an essential intermediate at the junction of anabolic and catabolic pathways. AcsA undergoes a two-step reaction. In the first half reaction, AcsA combines acetate with ATP to form acetyl-adenylate (AcAMP) intermediate. In the second half reaction, it can then transfer the acetyl group from AcAMP to the sulfhydryl group of CoA, forming the product AcCoA. The sequence is that of Acetyl-coenzyme A synthetase from Burkholderia mallei (strain NCTC 10247).